Here is a 270-residue protein sequence, read N- to C-terminus: tRNA pseudouridine synthase A (270 aa).

D60 acts as the Nucleophile in catalysis. An RNA binding region spans residues 107–111; that stretch reads FHARF. Y118 lines the substrate pocket. The interaction with tRNA stretch occupies residues 168–172; the sequence is QCQSR.

It belongs to the tRNA pseudouridine synthase TruA family. As to quaternary structure, homodimer.

The catalysed reaction is uridine(38/39/40) in tRNA = pseudouridine(38/39/40) in tRNA. In terms of biological role, formation of pseudouridine at positions 38, 39 and 40 in the anticodon stem and loop of transfer RNAs. The sequence is that of tRNA pseudouridine synthase A from Citrobacter koseri (strain ATCC BAA-895 / CDC 4225-83 / SGSC4696).